Consider the following 317-residue polypeptide: Putative S-adenosyl-L-methionine-dependent methyltransferase MSMEG_0093 (317 aa).

S-adenosyl-L-methionine contacts are provided by residues aspartate 134 and 163-164 (DL).

Belongs to the UPF0677 family.

Exhibits S-adenosyl-L-methionine-dependent methyltransferase activity. The protein is Putative S-adenosyl-L-methionine-dependent methyltransferase MSMEG_0093 of Mycolicibacterium smegmatis (strain ATCC 700084 / mc(2)155) (Mycobacterium smegmatis).